A 1006-amino-acid polypeptide reads, in one-letter code: DNA polymerase (1006 aa).

Belongs to the DNA polymerase type-B family. In terms of assembly, interacts with OPG148. Component of the Uracil-DNA glycosylase(UDG)-OPG148-polymerase complex; OPG148 and OPG116/UDG form a heterodimeric processivity factor that associates with OPG071 to form the processive polymerase holoenzyme.

It catalyses the reaction DNA(n) + a 2'-deoxyribonucleoside 5'-triphosphate = DNA(n+1) + diphosphate. Its function is as follows. Catalyzes DNA synthesis. Acquires processivity by associating with a heterodimeric processivity factor comprised of the viral OPG148 and OPG116 proteins, thereby forming the DNA polymerase holoenzyme. Displays 3'- to 5' exonuclease activity. Might participate in viral DNA recombination. Does not perform OPG116/D4synthesis across an abasic site. The sequence is that of DNA polymerase (OPG071) from Homo sapiens (Human).